A 48-amino-acid chain; its full sequence is Light-harvesting protein B-870 beta chain (48 aa).

The Cytoplasmic portion of the chain corresponds to 2-21; that stretch reads AERKGSISGLTDDEAQEFHK. Residues H20 and H38 each coordinate a bacteriochlorophyll. A helical transmembrane segment spans residues 22 to 44; sequence FWVQGFVGFTAVAVVAHFLVWVW. Residues 45 to 48 are Periplasmic-facing; sequence RPWL.

In terms of assembly, an alpha/beta heterodimer. The core complex is formed by different alpha and beta chains, binding bacteriochlorophyll molecules, and arranged most probably in tetrameric structures disposed around the reaction center. The non-pigmented gamma chains may constitute additional components.

The protein resides in the cell inner membrane. Functionally, antenna complexes are light-harvesting systems, which transfer the excitation energy to the reaction centers. This Rubrivivax gelatinosus (Rhodocyclus gelatinosus) protein is Light-harvesting protein B-870 beta chain (pufB).